The following is a 180-amino-acid chain: Large ribosomal subunit protein uL5 (180 aa).

This sequence belongs to the universal ribosomal protein uL5 family. In terms of assembly, part of the 50S ribosomal subunit; part of the 5S rRNA/L5/L18/L25 subcomplex. Contacts the 5S rRNA and the P site tRNA. Forms a bridge to the 30S subunit in the 70S ribosome.

Functionally, this is one of the proteins that bind and probably mediate the attachment of the 5S RNA into the large ribosomal subunit, where it forms part of the central protuberance. In the 70S ribosome it contacts protein S13 of the 30S subunit (bridge B1b), connecting the 2 subunits; this bridge is implicated in subunit movement. Contacts the P site tRNA; the 5S rRNA and some of its associated proteins might help stabilize positioning of ribosome-bound tRNAs. The protein is Large ribosomal subunit protein uL5 of Stenotrophomonas maltophilia (strain R551-3).